The primary structure comprises 88 residues: UPF0335 protein NGR_c28390 (88 aa).

This sequence belongs to the UPF0335 family.

In Sinorhizobium fredii (strain NBRC 101917 / NGR234), this protein is UPF0335 protein NGR_c28390.